The following is a 753-amino-acid chain: Polyribonucleotide nucleotidyltransferase (753 aa).

Mg(2+)-binding residues include aspartate 523 and aspartate 529. In terms of domain architecture, KH spans 589–648 (PRIISVRIPVDKIGAVIGPKGAMINQIQDDTGADITIEDDGTVLIGATDGASAEAARSAV). Residues 660 to 732 (GERYLGTVVK…DRGKLSLSPV (73 aa)) form the S1 motif domain. The tract at residues 733-753 (GAESDAVAETADAIESSQTEA) is disordered.

Belongs to the polyribonucleotide nucleotidyltransferase family. Requires Mg(2+) as cofactor.

The protein resides in the cytoplasm. The catalysed reaction is RNA(n+1) + phosphate = RNA(n) + a ribonucleoside 5'-diphosphate. Functionally, involved in mRNA degradation. Catalyzes the phosphorolysis of single-stranded polyribonucleotides processively in the 3'- to 5'-direction. This is Polyribonucleotide nucleotidyltransferase from Micrococcus luteus (strain ATCC 4698 / DSM 20030 / JCM 1464 / CCM 169 / CCUG 5858 / IAM 1056 / NBRC 3333 / NCIMB 9278 / NCTC 2665 / VKM Ac-2230) (Micrococcus lysodeikticus).